The sequence spans 155 residues: MSAVLTAEQALKLVGEMFVYHMPFNRALGMELERYEKEFAQLAFKNQPMMVGNWAQSILHGGVIASALDVAAGLVCVGSTLTRHETISEDELRQRLSRMGTIDLRVDYLRPGRGERFTATSSLLRAGNKVAVARVELHNEEQLYIASATATYMVG.

It belongs to the YigI thioesterase family.

The protein localises to the cytoplasm. The catalysed reaction is a fatty acyl-CoA + H2O = a fatty acid + CoA + H(+). The enzyme catalyses a medium-chain fatty acyl-CoA + H2O = a medium-chain fatty acid + CoA + H(+). It catalyses the reaction a long-chain fatty acyl-CoA + H2O = a long-chain fatty acid + CoA + H(+). Functionally, displays thioesterase activity against medium- to long-chain acyl-CoA substrates. Is involved in the thioesterase-dependent beta-oxidation pathway of (9Z,11E)-octadecadienoate (conjugated linoleic acid or CLA), along with TesB and FadM. The chain is Medium/long-chain acyl-CoA thioesterase YigI (yigI) from Shigella flexneri.